The following is a 167-amino-acid chain: Acetolactate synthase small subunit (167 aa).

One can recognise an ACT domain in the interval 7–81 (TLSVLVEAKP…NVIKIVELED (75 aa)).

This sequence belongs to the acetolactate synthase small subunit family. In terms of assembly, dimer of large and small chains.

The catalysed reaction is 2 pyruvate + H(+) = (2S)-2-acetolactate + CO2. The protein operates within amino-acid biosynthesis; L-isoleucine biosynthesis; L-isoleucine from 2-oxobutanoate: step 1/4. It functions in the pathway amino-acid biosynthesis; L-valine biosynthesis; L-valine from pyruvate: step 1/4. This is Acetolactate synthase small subunit (ilvH) from Mycobacterium avium.